The following is a 502-amino-acid chain: Cardiolipin synthase (502 aa).

The next 3 helical transmembrane spans lie at 7 to 27 (VAILVVIVGALLALTNGFWEG), 29 to 49 (LLGLFSVLMSCSVIFIALVIS), and 59 to 79 (IAWLAVLGSFPIVGFLFYLLF). PLD phosphodiesterase domains lie at 237 to 264 (INFRNHRKIIVIDGGVGFVGGLNIGDEY) and 415 to 442 (EKGFLHSKVIVVDGELASIGTANMDMRS). Catalysis depends on residues His242, Lys244, Asp249, His420, Lys422, and Asp427.

The protein belongs to the phospholipase D family. Cardiolipin synthase subfamily.

The protein localises to the cell membrane. The enzyme catalyses 2 a 1,2-diacyl-sn-glycero-3-phospho-(1'-sn-glycerol) = a cardiolipin + glycerol. Functionally, catalyzes the reversible phosphatidyl group transfer from one phosphatidylglycerol molecule to another to form cardiolipin (CL) (diphosphatidylglycerol) and glycerol. The protein is Cardiolipin synthase (cls) of Geobacillus kaustophilus (strain HTA426).